The following is a 481-amino-acid chain: Bifunctional protein GlmU (481 aa).

The segment at 1–235 is pyrophosphorylase; it reads MTHKERPLDV…PDEVMGANDR (235 aa). Residues 13–16, Lys27, Gln78, 83–84, 107–109, Gly146, Glu161, Asn176, and Asn233 each bind UDP-N-acetyl-alpha-D-glucosamine; these read LAAG, GT, and YGD. Asp109 lines the Mg(2+) pocket. Asn233 lines the Mg(2+) pocket. A linker region spans residues 236–256; that stretch reads VQLAQAAAVLRRRINTAHMQA. The segment at 257 to 481 is N-acetyltransferase; the sequence is GVTLQDPSTI…PWLAGWLERQ (225 aa). The UDP-N-acetyl-alpha-D-glucosamine site is built by Arg339 and Lys357. His369 serves as the catalytic Proton acceptor. Residues Tyr372 and Asn383 each coordinate UDP-N-acetyl-alpha-D-glucosamine. Acetyl-CoA-binding residues include Ala386, Ser411, Ala429, and Arg446.

It in the N-terminal section; belongs to the N-acetylglucosamine-1-phosphate uridyltransferase family. The protein in the C-terminal section; belongs to the transferase hexapeptide repeat family. As to quaternary structure, homotrimer. Requires Mg(2+) as cofactor.

It localises to the cytoplasm. The enzyme catalyses alpha-D-glucosamine 1-phosphate + acetyl-CoA = N-acetyl-alpha-D-glucosamine 1-phosphate + CoA + H(+). It carries out the reaction N-acetyl-alpha-D-glucosamine 1-phosphate + UTP + H(+) = UDP-N-acetyl-alpha-D-glucosamine + diphosphate. Its pathway is nucleotide-sugar biosynthesis; UDP-N-acetyl-alpha-D-glucosamine biosynthesis; N-acetyl-alpha-D-glucosamine 1-phosphate from alpha-D-glucosamine 6-phosphate (route II): step 2/2. The protein operates within nucleotide-sugar biosynthesis; UDP-N-acetyl-alpha-D-glucosamine biosynthesis; UDP-N-acetyl-alpha-D-glucosamine from N-acetyl-alpha-D-glucosamine 1-phosphate: step 1/1. It functions in the pathway bacterial outer membrane biogenesis; LPS lipid A biosynthesis. Catalyzes the last two sequential reactions in the de novo biosynthetic pathway for UDP-N-acetylglucosamine (UDP-GlcNAc). The C-terminal domain catalyzes the transfer of acetyl group from acetyl coenzyme A to glucosamine-1-phosphate (GlcN-1-P) to produce N-acetylglucosamine-1-phosphate (GlcNAc-1-P), which is converted into UDP-GlcNAc by the transfer of uridine 5-monophosphate (from uridine 5-triphosphate), a reaction catalyzed by the N-terminal domain. This chain is Bifunctional protein GlmU, found in Deinococcus geothermalis (strain DSM 11300 / CIP 105573 / AG-3a).